We begin with the raw amino-acid sequence, 273 residues long: Probable NAD(P)H dehydrogenase (quinone) FQR1-like 2 (273 aa).

The interval 1-60 (MGKGGGCVPSKKKKPATTGDGPGIDDDNDATNAPIQIDDDQTTIDGDRTTATNTGGTTTP) is disordered. Over residues 49–60 (TTATNTGGTTTP) the composition is skewed to low complexity. The 189-residue stretch at 75–263 (IFVVFYSMYG…ALAEHQGNYM (189 aa)) folds into the Flavodoxin-like domain. Residues 81 to 85 (SMYGH), 183 to 236 (FFVS…SPYG), and His-207 contribute to the FMN site. Position 83 (Tyr-83) interacts with NAD(+).

This sequence belongs to the WrbA family. It depends on FMN as a cofactor.

It localises to the cell membrane. The catalysed reaction is a quinone + NADH + H(+) = a quinol + NAD(+). The enzyme catalyses a quinone + NADPH + H(+) = a quinol + NADP(+). In terms of biological role, catalyzes the transfer of electrons from NADH and NADPH to reduce quinone to the hydroquinone state. The protein is Probable NAD(P)H dehydrogenase (quinone) FQR1-like 2 of Arabidopsis thaliana (Mouse-ear cress).